The sequence spans 121 residues: Large ribosomal subunit protein uL22 (121 aa).

The protein belongs to the universal ribosomal protein uL22 family. Part of the 50S ribosomal subunit.

This protein binds specifically to 23S rRNA; its binding is stimulated by other ribosomal proteins, e.g. L4, L17, and L20. It is important during the early stages of 50S assembly. It makes multiple contacts with different domains of the 23S rRNA in the assembled 50S subunit and ribosome. In terms of biological role, the globular domain of the protein is located near the polypeptide exit tunnel on the outside of the subunit, while an extended beta-hairpin is found that lines the wall of the exit tunnel in the center of the 70S ribosome. The protein is Large ribosomal subunit protein uL22 of Paenarthrobacter aurescens (strain TC1).